The chain runs to 610 residues: MNRSNIWNLLFTILIIVTLFWLARFFYVENSPVSKLSYTSFVQMVEDERSVVSEVVIRDDGVLRVYTKDGRVYEVDAPWAVNDSQLIEKLVSKGIKVSGERSGSSSFWINVLGTLIPTILFIVVWLFIMRSLSGRNNQAFTFTKSRATMYKPSGNKRVTFKDVGGAEEAIEELKEVVEFLKDPSKFNRIGARMPKGILLVGPPGTGKTLLARAVAGEANVPFFHISGSDFVELFVGVGAARVRDLFAQAKAHAPCIVFIDEIDAVGRHRGAGLGGGHDEREQTLNQLLVEMDGFDSKEGIIVMAATNRPDILDPALLRPGRFDKKIVVDPPDMLGRKKILEIHTRNKPLAEDVNLEIIAKRTPGFVGADLENLVNEAALLAAREGRDKITMKDFEEAIDRVIAGPARKSKLISPKEKRIIAYHEAGHAVVSTVVPNGEPVHRISIIPRGYKALGYTLHLPEEDKYLVSRNELLDKLTALLGGRAAEEVVFGDVTSGAANDIERATEIARNMVCQLGMSEELGPLAWGKEEQEVFLGKEITRLRNYSEEVASKIDEEVKKIVTNCYERAKEIIRKYRKQLDNIVEILLEKETIEGDELRRILSEEFEKVVE.

Residues 1-5 lie on the Cytoplasmic side of the membrane; that stretch reads MNRSN. A helical membrane pass occupies residues 6-26; the sequence is IWNLLFTILIIVTLFWLARFF. Residues 27-107 lie on the Periplasmic side of the membrane; that stretch reads YVENSPVSKL…SGERSGSSSF (81 aa). The helical transmembrane segment at 108–128 threads the bilayer; sequence WINVLGTLIPTILFIVVWLFI. The Cytoplasmic portion of the chain corresponds to 129 to 610; it reads MRSLSGRNNQ…LSEEFEKVVE (482 aa). ATP-binding positions include glycine 164, 204–208, leucine 209, histidine 343, and glutamate 371; that span reads GTGKT. A Zn(2+)-binding site is contributed by histidine 423. Residue glutamate 424 is part of the active site. Positions 427 and 500 each coordinate Zn(2+).

This sequence in the central section; belongs to the AAA ATPase family. In the C-terminal section; belongs to the peptidase M41 family. As to quaternary structure, the isolated ADP-bound cytosolic domain forms a 6-fold symmetric protease disk and a 2-fold symmetric AAA ATPase ring. In the absence of nucleotide the AAA ATPase ring also forms symmetric hexamers. Requires Zn(2+) as cofactor.

Its subcellular location is the cell inner membrane. In terms of biological role, acts as a processive, ATP-dependent zinc metallopeptidase for both cytoplasmic and membrane proteins. Plays a role in the quality control of integral membrane proteins. This Thermotoga maritima (strain ATCC 43589 / DSM 3109 / JCM 10099 / NBRC 100826 / MSB8) protein is ATP-dependent zinc metalloprotease FtsH.